The following is a 458-amino-acid chain: ATP synthase subunit beta (458 aa).

Position 148-155 (148-155 (GGAGVGKT)) interacts with ATP.

It belongs to the ATPase alpha/beta chains family. As to quaternary structure, F-type ATPases have 2 components, CF(1) - the catalytic core - and CF(0) - the membrane proton channel. CF(1) has five subunits: alpha(3), beta(3), gamma(1), delta(1), epsilon(1). CF(0) has three main subunits: a(1), b(2) and c(9-12). The alpha and beta chains form an alternating ring which encloses part of the gamma chain. CF(1) is attached to CF(0) by a central stalk formed by the gamma and epsilon chains, while a peripheral stalk is formed by the delta and b chains.

Its subcellular location is the cell inner membrane. The enzyme catalyses ATP + H2O + 4 H(+)(in) = ADP + phosphate + 5 H(+)(out). Its function is as follows. Produces ATP from ADP in the presence of a proton gradient across the membrane. The catalytic sites are hosted primarily by the beta subunits. The polypeptide is ATP synthase subunit beta (Halorhodospira halophila (strain DSM 244 / SL1) (Ectothiorhodospira halophila (strain DSM 244 / SL1))).